The sequence spans 554 residues: MNIIDQVKQTLIEEITASVKAAGLAEEVPEVKVEIPKDPKNGDYSTNIAMVLTKIAKRNPHEIAQAIVDHLDKSKANVEKIEIAGPGFINFYLNNQYLTAVIPEALEKDKDFGRNEDPKHQKVLVEYVSANPTGDLHIGHARNAAVGDTLSNILDAAGYDVTREYYINDAGNQITNLAHSIEARYDQAMGKETELPADGYYGKDIINIGKDLAEKRPELKDLPEDERLKVFRQLGVDYEMEKLKKDLADFNTHFDGWFSETTLYDKGEIKKVLELMKENGYTYEADGATWLRTTDFNDDKDRVIIKKDGSYTYFLPDVAYHYDKFHRDGGQDILINLFGADHHGYINRLKASVETYGIDADRLEIQIMQMVRLMQDGEEVKMSKRTGNAITLREIMDEVGIDAARYFLTMRSPDTHFDFDMELAKENSAENPVYYAQYAHARISSILKQAGERGITPSENADFSVITNDKAIDLLKKVAEFEPMIESAAEHRAPHRVTNYIQELASAFHKFYNADKVLTDDEKKTQAYVSMIAAVQITLRNALALVGVSAPHNM.

The 'HIGH' region signature appears at 130 to 140 (ANPTGDLHIGH).

Belongs to the class-I aminoacyl-tRNA synthetase family. As to quaternary structure, monomer.

The protein resides in the cytoplasm. It carries out the reaction tRNA(Arg) + L-arginine + ATP = L-arginyl-tRNA(Arg) + AMP + diphosphate. This Staphylococcus carnosus (strain TM300) protein is Arginine--tRNA ligase.